A 468-amino-acid chain; its full sequence is Maltose fermentation regulatory protein MAL33 (468 aa).

Residues 8–34 (CDYCRVRRVKCDGKKPCSRCIEHNFDC) constitute a DNA-binding region (zn(2)-C6 fungal-type). Residues 41-49 (KKRGSKPIG) carry the Nuclear localization signal motif.

This sequence belongs to the MAL13 family.

It is found in the nucleus. Its function is as follows. Regulates the coordinate transcription of structural MAL3S (maltase) and MAL3T (maltose permease) genes. This chain is Maltose fermentation regulatory protein MAL33 (MAL33), found in Saccharomyces cerevisiae (strain ATCC 204508 / S288c) (Baker's yeast).